Reading from the N-terminus, the 271-residue chain is tRNA (guanine-N(1)-)-methyltransferase (271 aa).

Residues Gly-120 and 145-150 contribute to the S-adenosyl-L-methionine site; that span reads IGDYVL.

This sequence belongs to the RNA methyltransferase TrmD family. As to quaternary structure, homodimer.

It is found in the cytoplasm. The catalysed reaction is guanosine(37) in tRNA + S-adenosyl-L-methionine = N(1)-methylguanosine(37) in tRNA + S-adenosyl-L-homocysteine + H(+). Its function is as follows. Specifically methylates guanosine-37 in various tRNAs. This is tRNA (guanine-N(1)-)-methyltransferase from Bifidobacterium longum (strain NCC 2705).